The sequence spans 125 residues: Small ribosomal subunit protein uS12 (125 aa).

A 3-methylthioaspartic acid modification is found at aspartate 89.

It belongs to the universal ribosomal protein uS12 family. In terms of assembly, part of the 30S ribosomal subunit. Contacts proteins S8 and S17. May interact with IF1 in the 30S initiation complex.

Its function is as follows. With S4 and S5 plays an important role in translational accuracy. Interacts with and stabilizes bases of the 16S rRNA that are involved in tRNA selection in the A site and with the mRNA backbone. Located at the interface of the 30S and 50S subunits, it traverses the body of the 30S subunit contacting proteins on the other side and probably holding the rRNA structure together. The combined cluster of proteins S8, S12 and S17 appears to hold together the shoulder and platform of the 30S subunit. This Clostridium botulinum (strain ATCC 19397 / Type A) protein is Small ribosomal subunit protein uS12.